Reading from the N-terminus, the 401-residue chain is MLSPTNSTSKTAPVPPRDSSKPVLISEEPRNQLLQKVARTALAVLLVVVTLGLILLFYSFSDLQSFPWCCQTHPSTKEQPTISIPVPLPSPPLAVPRPSTPPPPVISRPSTPSAPKPSTPPPLLPKAPKPVKTQEDLLPLVPEQVFVEMYEDMARRQTIEALVPAWDSDIIFKCLCYFHTLYPGLIPLETFPPATIFNFKQKIISILEDKKAVLRGEPIKGPLPICCSKENYRRHLQRTTLLPVFMWYHPTPKTLSDTMQTMKQLAIKGSVGASHWLLVIVDIQARRLVYFDSLYNYVMPPENMKKELQSFAQQLDQVYPAYDSKKFSVKIAAKEVIQRGSGSSCGAWCCQFLHWYLKDPLTDALNDLPVDSVERHENLASFVQACEAAVQDLPELSWPEA.

A compositionally biased stretch (polar residues) spans 1 to 11 (MLSPTNSTSKT). The tract at residues 1–24 (MLSPTNSTSKTAPVPPRDSSKPVL) is disordered. Residues 40–60 (TALAVLLVVVTLGLILLFYSF) traverse the membrane as a helical segment. The segment at 77–130 (KEQPTISIPVPLPSPPLAVPRPSTPPPPVISRPSTPSAPKPSTPPPLLPKAPKP) is disordered. A compositionally biased stretch (pro residues) spans 86–128 (VPLPSPPLAVPRPSTPPPPVISRPSTPSAPKPSTPPPLLPKAP). Active-site residues include His-275, Asp-292, and Cys-345.

The protein belongs to the peptidase C48 family. As to quaternary structure, binds to host NFKBIA.

It is found in the secreted. The protein resides in the host cell. It localises to the membrane. Effector proteins function to alter host cell physiology and promote bacterial survival in host tissues. This protease possesses deubiquitinating and deneddylating activities. Impairs ubiquitination and degradation of NF-kappa-B inhibitor alpha (NFKBIA), thereby preventing NF-kappa-B activation. This is Deubiquitinase and deneddylase Dub1 (cdu1) from Chlamydia trachomatis serovar L2 (strain ATCC VR-902B / DSM 19102 / 434/Bu).